A 638-amino-acid chain; its full sequence is Chaperone protein DnaK (638 aa).

At Thr-200 the chain carries Phosphothreonine; by autocatalysis. Positions 599–623 (LHMAATAEQQSASTGAGAGSSAKVD) are disordered. Low complexity predominate over residues 609-620 (SASTGAGAGSSA).

Belongs to the heat shock protein 70 family.

In terms of biological role, acts as a chaperone. The sequence is that of Chaperone protein DnaK from Xylella fastidiosa (strain M12).